A 326-amino-acid polypeptide reads, in one-letter code: Pyruvate dehydrogenase E1 component subunit beta (326 aa).

A thiamine diphosphate-binding site is contributed by E59.

Heterodimer of an alpha and a beta chain. Requires thiamine diphosphate as cofactor.

The catalysed reaction is N(6)-[(R)-lipoyl]-L-lysyl-[protein] + pyruvate + H(+) = N(6)-[(R)-S(8)-acetyldihydrolipoyl]-L-lysyl-[protein] + CO2. In terms of biological role, the pyruvate dehydrogenase complex catalyzes the overall conversion of pyruvate to acetyl-CoA and CO(2). It contains multiple copies of three enzymatic components: pyruvate dehydrogenase (E1), dihydrolipoamide acetyltransferase (E2) and lipoamide dehydrogenase (E3). This Rickettsia conorii (strain ATCC VR-613 / Malish 7) protein is Pyruvate dehydrogenase E1 component subunit beta (pdhB).